Consider the following 533-residue polypeptide: Glucose-6-phosphate exchanger SLC37A1 (533 aa).

A helical membrane pass occupies residues 18–38 (QWYRAFIFILTFLLYASFHLS). N-linked (GlcNAc...) asparagine glycosylation is present at asparagine 81. Helical transmembrane passes span 100–120 (GALD…SGII), 129–149 (YLTF…LGYF), 157–177 (FYVV…PSVV), and 222–242 (SFVV…LFLI). An N-linked (GlcNAc...) asparagine glycan is attached at asparagine 263. The next 7 helical transmembrane spans lie at 304–324 (VVIL…TGAL), 334–354 (LCLL…PLYI), 366–386 (GELS…AGVI), 394–414 (ASTC…FSTV), 423–443 (IAML…ITTA), 466–486 (AIID…AGLL), and 490–510 (GWSN…LFLI).

This sequence belongs to the major facilitator superfamily. Organophosphate:Pi antiporter (OPA) (TC 2.A.1.4) family. In terms of tissue distribution, expressed in numerous tissues, with highest expression in pancreas, kidney, bone marrow, spleen, liver, small intestine, as well as in fetal brain, liver and spleen.

The protein localises to the endoplasmic reticulum membrane. The catalysed reaction is D-glucose 6-phosphate(in) + phosphate(out) = D-glucose 6-phosphate(out) + phosphate(in). Inhibited by vanadate but not by chlorogenic acid. In terms of biological role, inorganic phosphate and glucose-6-phosphate antiporter. May transport cytoplasmic glucose-6-phosphate into the lumen of the endoplasmic reticulum and translocate inorganic phosphate into the opposite direction. Independent of a lumenal glucose-6-phosphatase. May not play a role in homeostatic regulation of blood glucose levels. The sequence is that of Glucose-6-phosphate exchanger SLC37A1 from Homo sapiens (Human).